The following is a 414-amino-acid chain: Lipoyl synthase, mitochondrial (414 aa).

Residues 1–31 (MAVSTSHFRSLCASRPLSRTAIVGHISCRSY) constitute a mitochondrion transit peptide. The interval 31–51 (YATTEPSPSATSTSTTTTARR) is disordered. The segment covering 32-48 (ATTEPSPSATSTSTTTT) has biased composition (low complexity). Residues Cys131, Cys136, Cys142, Cys162, Cys166, Cys169, and Ser377 each coordinate [4Fe-4S] cluster. The Radical SAM core domain occupies 145–366 (GSDKSAATAT…RQRALDMGFL (222 aa)).

This sequence belongs to the radical SAM superfamily. Lipoyl synthase family. [4Fe-4S] cluster is required as a cofactor.

The protein localises to the mitochondrion. It carries out the reaction [[Fe-S] cluster scaffold protein carrying a second [4Fe-4S](2+) cluster] + N(6)-octanoyl-L-lysyl-[protein] + 2 oxidized [2Fe-2S]-[ferredoxin] + 2 S-adenosyl-L-methionine + 4 H(+) = [[Fe-S] cluster scaffold protein] + N(6)-[(R)-dihydrolipoyl]-L-lysyl-[protein] + 4 Fe(3+) + 2 hydrogen sulfide + 2 5'-deoxyadenosine + 2 L-methionine + 2 reduced [2Fe-2S]-[ferredoxin]. It participates in protein modification; protein lipoylation via endogenous pathway; protein N(6)-(lipoyl)lysine from octanoyl-[acyl-carrier-protein]: step 2/2. Its function is as follows. Catalyzes the radical-mediated insertion of two sulfur atoms into the C-6 and C-8 positions of the octanoyl moiety bound to the lipoyl domains of lipoate-dependent enzymes, thereby converting the octanoylated domains into lipoylated derivatives. The polypeptide is Lipoyl synthase, mitochondrial (Aspergillus fumigatus (strain CBS 144.89 / FGSC A1163 / CEA10) (Neosartorya fumigata)).